The following is a 310-amino-acid chain: Methionyl-tRNA formyltransferase (310 aa).

Residue 109 to 112 (SLLP) coordinates (6S)-5,6,7,8-tetrahydrofolate.

It belongs to the Fmt family.

The catalysed reaction is L-methionyl-tRNA(fMet) + (6R)-10-formyltetrahydrofolate = N-formyl-L-methionyl-tRNA(fMet) + (6S)-5,6,7,8-tetrahydrofolate + H(+). Functionally, attaches a formyl group to the free amino group of methionyl-tRNA(fMet). The formyl group appears to play a dual role in the initiator identity of N-formylmethionyl-tRNA by promoting its recognition by IF2 and preventing the misappropriation of this tRNA by the elongation apparatus. The sequence is that of Methionyl-tRNA formyltransferase from Pseudomonas paraeruginosa (strain DSM 24068 / PA7) (Pseudomonas aeruginosa (strain PA7)).